Reading from the N-terminus, the 577-residue chain is Insulin-like growth factor 2 mRNA-binding protein 1 (577 aa).

RRM domains lie at 2–75 (NKLY…HSVP) and 81–156 (RKIQ…YIPD). Phosphoserine occurs at positions 12 and 73. The segment at 160–190 (AQGPENGRRGGFGSRGQPRQGSPVAAGAPAK) is disordered. Ser181 carries the phosphoserine modification. 4 KH domains span residues 195-260 (DIPL…CKMI), 276-343 (EVPL…EQEI), 405-470 (QEMV…QGRI), and 487-553 (KLET…QRKI). A sufficient for nuclear export region spans residues 310 to 324 (ITISSLQDLTLYNPE). Residues 485–495 (EVKLETHIRVP) form a sufficient for nuclear export region. At Thr528 the chain carries Phosphothreonine.

The protein belongs to the RRM IMP/VICKZ family. As to quaternary structure, can form homodimers and heterodimers with IGF2BP1 and IGF2BP3. Component of the coding region determinant (CRD)-mediated complex, composed of DHX9, HNRNPU, IGF2BP1, SYNCRIP and YBX1. During HCV infection, identified in a HCV IRES-mediated translation complex, at least composed of EIF3C, IGF2BP1, RPS3 and HCV RNA-replicon. Interacts (via the KH domains) with HIV-1 GAG (via the second zinc finger motif of NC). Associates (via the RRM domains and KH domains) with HIV-1 particles. Identified in a mRNP complex, composed of at least DHX9, DDX3X, ELAVL1, HNRNPU, IGF2BP1, ILF3, PABPC1, PCBP2, PTBP2, STAU1, STAU2, SYNCRIP and YBX1. Identified in a IGF2BP1-dependent mRNP granule complex containing untranslated mRNAs. Interacts with DHX9, ELAVL2, HNRNPA2B1, HNRNPC, HNRNPH1, HNRNPU, IGF2BP2, ILF2, and YBX1. Interacts with FMR1. Component of a multisubunit autoregulatory RNP complex (ARC), at least composed of IGF2BP1, PABPC1 and CSDE1/UNR. Directly interacts with PABPC1. Component of a TAU mRNP complex, at least composed of IGF2BP1, ELAVL4 and G3BP. Interacts with ELAVL4 in an RNA-dependent manner. Associates with microtubules and polysomes. Interacts with AGO1 and AGO2. Interacts with ELAVL1 and MATR3. Interacts (via KH3 and KH4 domains) with SEPIN14P20 peptide RBRP; the interaction results in increased binding of IGF2BP1 to N6-methyladenosine (m6A)-containing mRNAs. In terms of processing, phosphorylated at Ser-181 by mTORC2 cotranslationally, promoting binding to the 3'-UTR of IGF2 mRNA. Mainly expressed in the embryo, including in fetal liver, fetal lung, fetal kidney, fetal thymus (at protein level). Also expressed follicles of ovary, as well as in gonocytes of testis, spermatogonia, semen, oocytes and placenta (at protein level). Expressed in various cancers, including testis and lung cancers (at protein level), as well as kidney, prostate and trachea cancers.

The protein localises to the nucleus. The protein resides in the cytoplasm. It is found in the perinuclear region. It localises to the P-body. Its subcellular location is the stress granule. The protein localises to the cell projection. The protein resides in the lamellipodium. It is found in the dendrite. It localises to the dendritic spine. Its subcellular location is the growth cone. The protein localises to the filopodium. The protein resides in the axon. In terms of biological role, RNA-binding factor that recruits target transcripts to cytoplasmic protein-RNA complexes (mRNPs). This transcript 'caging' into mRNPs allows mRNA transport and transient storage. It also modulates the rate and location at which target transcripts encounter the translational apparatus and shields them from endonuclease attacks or microRNA-mediated degradation. Preferentially binds to N6-methyladenosine (m6A)-containing mRNAs and increases their stability. Plays a direct role in the transport and translation of transcripts required for axonal regeneration in adult sensory neurons. Regulates localized beta-actin/ACTB mRNA translation, a crucial process for cell polarity, cell migration and neurite outgrowth. Co-transcriptionally associates with the ACTB mRNA in the nucleus. This binding involves a conserved 54-nucleotide element in the ACTB mRNA 3'-UTR, known as the 'zipcode'. The RNP thus formed is exported to the cytoplasm, binds to a motor protein and is transported along the cytoskeleton to the cell periphery. During transport, prevents ACTB mRNA from being translated into protein. When the RNP complex reaches its destination near the plasma membrane, IGF2BP1 is phosphorylated. This releases the mRNA, allowing ribosomal 40S and 60S subunits to assemble and initiate ACTB protein synthesis. Monomeric ACTB then assembles into the subcortical actin cytoskeleton. During neuronal development, key regulator of neurite outgrowth, growth cone guidance and neuronal cell migration, presumably through the spatiotemporal fine tuning of protein synthesis, such as that of ACTB. May regulate mRNA transport to activated synapses. Binds to and stabilizes ABCB1/MDR-1 mRNA. During interstinal wound repair, interacts with and stabilizes PTGS2 transcript. PTGS2 mRNA stabilization may be crucial for colonic mucosal wound healing. Binds to the 3'-UTR of IGF2 mRNA by a mechanism of cooperative and sequential dimerization and regulates IGF2 mRNA subcellular localization and translation. Binds to MYC mRNA, in the coding region instability determinant (CRD) of the open reading frame (ORF), hence preventing MYC cleavage by endonucleases and possibly microRNA targeting to MYC-CRD. Binding to MYC mRNA is enhanced by m6A-modification of the CRD. Binds to the 3'-UTR of CD44 mRNA and stabilizes it, hence promotes cell adhesion and invadopodia formation in cancer cells. Binds to the oncofetal H19 transcript and to the neuron-specific TAU mRNA and regulates their localizations. Binds to and stabilizes BTRC/FBW1A mRNA. Binds to the adenine-rich autoregulatory sequence (ARS) located in PABPC1 mRNA and represses its translation. PABPC1 mRNA-binding is stimulated by PABPC1 protein. Prevents BTRC/FBW1A mRNA degradation by disrupting microRNA-dependent interaction with AGO2. Promotes the directed movement of tumor-derived cells by fine-tuning intracellular signaling networks. Binds to MAPK4 3'-UTR and inhibits its translation. Interacts with PTEN transcript open reading frame (ORF) and prevents mRNA decay. This combined action on MAPK4 (down-regulation) and PTEN (up-regulation) antagonizes HSPB1 phosphorylation, consequently it prevents G-actin sequestration by phosphorylated HSPB1, allowing F-actin polymerization. Hence enhances the velocity of cell migration and stimulates directed cell migration by PTEN-modulated polarization. Interacts with Hepatitis C virus (HCV) 5'-UTR and 3'-UTR and specifically enhances translation at the HCV IRES, but not 5'-cap-dependent translation, possibly by recruiting eIF3. Interacts with HIV-1 GAG protein and blocks the formation of infectious HIV-1 particles. Reduces HIV-1 assembly by inhibiting viral RNA packaging, as well as assembly and processing of GAG protein on cellular membranes. During cellular stress, such as oxidative stress or heat shock, stabilizes target mRNAs that are recruited to stress granules, including CD44, IGF2, MAPK4, MYC, PTEN, RAPGEF2 and RPS6KA5 transcripts. This is Insulin-like growth factor 2 mRNA-binding protein 1 (IGF2BP1) from Homo sapiens (Human).